The following is a 370-amino-acid chain: MWRGGRLGSRGVRLLETLGFGCPSAVAQPPRLTSRSAYSGTQLTRNLQIKPWELGEHGTMCFRSYRMALSCLSRVKTYRTPWKRLYSTSQTTVDSREVKNFQALAHTWWDEYGKFAPLHSMNDLRVPFIRDNLLKTSASHHPGKPLSGMKILDVGCGGGLLTEPLGRLGASVVGIDPVAENIKIAQHHKSFDPVLDKRIQYKVCSLEEAVDESAECFDAVVASEVVEHVSHLEMFIQCCYQVLKPGGSLFITTVNKTQLSYALGIVFAEQIAGIVPKGTHTWEKFVSPEKLESILEPNGLSVETVAGLVYNPFSGYWHWSENTSLNYAAHAVRSRAQEHQEPAESALKGETGALHANTSGSPSVREEQRT.

The transit peptide at 1-86 (MWRGGRLGSR…TYRTPWKRLY (86 aa)) directs the protein to the mitochondrion. Arginine 125 is an S-adenosyl-L-methionine binding site. Lysine 144 and lysine 150 each carry N6-acetyllysine. Residues glycine 155 and aspartate 176 each coordinate S-adenosyl-L-methionine. Lysine 197 is subject to N6-acetyllysine. Serine 223 provides a ligand contact to S-adenosyl-L-methionine. Glutamate 224, glutamate 227, and histidine 228 together coordinate Mg(2+). The interval 336-370 (AQEHQEPAESALKGETGALHANTSGSPSVREEQRT) is disordered.

The protein belongs to the class I-like SAM-binding methyltransferase superfamily. UbiG/COQ3 family. Component of a multi-subunit COQ enzyme complex, composed of at least COQ3, COQ4, COQ5, COQ6, COQ7 and COQ9. Requires Mg(2+) as cofactor.

It is found in the mitochondrion inner membrane. It carries out the reaction 3,4-dihydroxy-5-(all-trans-decaprenyl)benzoate + S-adenosyl-L-methionine = 4-hydroxy-3-methoxy-5-(all-trans-decaprenyl)benzoate + S-adenosyl-L-homocysteine + H(+). It catalyses the reaction a 3-demethylubiquinone + S-adenosyl-L-methionine = a ubiquinone + S-adenosyl-L-homocysteine. The enzyme catalyses 3-demethylubiquinol-10 + S-adenosyl-L-methionine = ubiquinol-10 + S-adenosyl-L-homocysteine + H(+). It functions in the pathway cofactor biosynthesis; ubiquinone biosynthesis. Functionally, O-methyltransferase required for two non-consecutive steps during ubiquinone biosynthesis. Catalyzes the 2 O-methylation of 3,4-dihydroxy-5-(all-trans-decaprenyl)benzoic acid into 4-hydroxy-3-methoxy-5-(all-trans-decaprenyl)benzoic acid. Also catalyzes the last step of ubiquinone biosynthesis by mediating methylation of 3-demethylubiquinone into ubiquinone. Also able to mediate the methylation of 3-demethylubiquinol-10 into ubiquinol-10. The chain is Ubiquinone biosynthesis O-methyltransferase, mitochondrial from Mus musculus (Mouse).